We begin with the raw amino-acid sequence, 489 residues long: UDP-N-acetylmuramoylalanine--D-glutamate ligase (489 aa).

126–132 serves as a coordination point for ATP; sequence GTNGKTT.

The protein belongs to the MurCDEF family.

Its subcellular location is the cytoplasm. The enzyme catalyses UDP-N-acetyl-alpha-D-muramoyl-L-alanine + D-glutamate + ATP = UDP-N-acetyl-alpha-D-muramoyl-L-alanyl-D-glutamate + ADP + phosphate + H(+). It participates in cell wall biogenesis; peptidoglycan biosynthesis. Its function is as follows. Cell wall formation. Catalyzes the addition of glutamate to the nucleotide precursor UDP-N-acetylmuramoyl-L-alanine (UMA). In Mycolicibacterium paratuberculosis (strain ATCC BAA-968 / K-10) (Mycobacterium paratuberculosis), this protein is UDP-N-acetylmuramoylalanine--D-glutamate ligase.